A 570-amino-acid chain; its full sequence is Cation/calcium exchanger 1 (570 aa).

13 consecutive transmembrane segments (helical) span residues 14-34 (LSLLINIFFIFLIFLHFASQT), 97-117 (SPVLGHLVLSAWLFVLFYLLG), 141-161 (MAGVTLLSLGNGAPDLFSSVV), 176-196 (ILGGAFFVSSFVVGTICVLIG), 212-232 (VFLLVALCCLGLIIFIGKVTI), 235-255 (ALCYLSIYLLYVGFLSVSHFF), 344-364 (CAVVSTAIAPVLLTELYCSHY), 371-391 (LILYIISGSIGLIVGILAYLT), 401-421 (FSLVWLLGGFTMSVTWTYMIA), 427-447 (LLISLGNIFGISPSVLGLTVL), 479-499 (YAGPLFNTVIGLGVPLVISSL), 513-533 (SLLETLGFLMVGLLWALVIMP), and 546-566 (GLLAIYLCFLSLRLARVFGVL).

This sequence belongs to the Ca(2+):cation antiporter (CaCA) (TC 2.A.19) family. Cation/calcium exchanger (CCX) subfamily. As to expression, expressed in roots, leaves, stems and flowers.

The protein resides in the vacuole membrane. Functionally, vacuolar membrane-localized H(+)-dependent K(+) and Na(+) transporter. This Arabidopsis thaliana (Mouse-ear cress) protein is Cation/calcium exchanger 1 (CCX1).